The sequence spans 102 residues: Mitochondrial import inner membrane translocase subunit Tim10 B (102 aa).

The short motif at 27–51 (CFQRCVPSLHHRALDAEEEACLHSC) is the Twin CX3C motif element. Disulfide bonds link Cys-27-Cys-51 and Cys-31-Cys-47.

In terms of assembly, component of the TIM22 complex, which core is composed of TIMM22, associated with TIMM10 (TIMM10A and/or TIMM10B), TIMM9, AGK and TIMM29.

Its subcellular location is the mitochondrion inner membrane. In terms of biological role, component of the TIM22 complex, a complex that mediates the import and insertion of multi-pass transmembrane proteins into the mitochondrial inner membrane. The TIM22 complex forms a twin-pore translocase that uses the membrane potential as the external driving force. In the TIM22 complex, it may act as a docking point for the soluble 70 kDa complex that guides the target proteins in transit through the aqueous mitochondrial intermembrane space. The protein is Mitochondrial import inner membrane translocase subunit Tim10 B (TIMM10B) of Pongo abelii (Sumatran orangutan).